The chain runs to 104 residues: Large ribosomal subunit protein uL24 (104 aa).

It belongs to the universal ribosomal protein uL24 family. As to quaternary structure, part of the 50S ribosomal subunit.

Functionally, one of two assembly initiator proteins, it binds directly to the 5'-end of the 23S rRNA, where it nucleates assembly of the 50S subunit. Its function is as follows. One of the proteins that surrounds the polypeptide exit tunnel on the outside of the subunit. The chain is Large ribosomal subunit protein uL24 from Pseudomonas fluorescens (strain Pf0-1).